Here is a 415-residue protein sequence, read N- to C-terminus: Transcriptional regulator fogI (415 aa).

Residues C12–C39 constitute a DNA-binding region (zn(2)-C6 fungal-type). The interval D50–P153 is disordered. 2 stretches are compositionally biased toward low complexity: residues V80 to T102 and Q123 to P135.

The protein localises to the nucleus. Transcriptional regulator that postively regulates the expression of the gene cluster that mediates the biosynthesis of flavoglaucin and congeners (including aspergin, dihydroauroglaucin and auroglaucin), prenylated salicylaldehyde derivatives carrying a saturated or an unsaturated C-7 side chain. The protein is Transcriptional regulator fogI of Aspergillus ruber (strain CBS 135680).